Consider the following 120-residue polypeptide: Basic phospholipase A2 homolog piratoxin-3 (120 aa).

Intrachain disulfides connect Cys26–Cys113, Cys28–Cys44, Cys43–Cys94, Cys49–Cys120, Cys50–Cys87, Cys57–Cys81, and Cys75–Cys85. An important for membrane-damaging activities in eukaryotes and bacteria; heparin-binding region spans residues 104 to 115 (KKYRYHLKPCKK).

The protein belongs to the phospholipase A2 family. Group II subfamily. D49 sub-subfamily. In terms of assembly, homodimer; non-covalently linked (probable alternative/compact dimer conformation). In terms of tissue distribution, expressed by the venom gland.

Its subcellular location is the secreted. In terms of biological role, snake venom phospholipase A2 (PLA2) that lacks enzymatic activity. Shows high myotoxin activities. Also has anticoagulant activity. A model of myotoxic mechanism has been proposed: an apo Lys49-PLA2 is activated by the entrance of a hydrophobic molecule (e.g. fatty acid) at the hydrophobic channel of the protein leading to a reorientation of a monomer. This reorientation causes a transition between 'inactive' to 'active' states, causing alignment of C-terminal and membrane-docking sites (MDoS) side-by-side and putting the membrane-disruption sites (MDiS) in the same plane, exposed to solvent and in a symmetric position for both monomers. The MDoS region stabilizes the toxin on membrane by the interaction of charged residues with phospholipid head groups. Subsequently, the MDiS region destabilizes the membrane with penetration of hydrophobic residues. This insertion causes a disorganization of the membrane, allowing an uncontrolled influx of ions (i.e. calcium and sodium), and eventually triggering irreversible intracellular alterations and cell death. This chain is Basic phospholipase A2 homolog piratoxin-3, found in Bothrops pirajai (Piraja's lancehead).